Here is a 109-residue protein sequence, read N- to C-terminus: Nucleoid-associated protein Psyc_0793 (109 aa).

It belongs to the YbaB/EbfC family. Homodimer.

The protein localises to the cytoplasm. Its subcellular location is the nucleoid. Binds to DNA and alters its conformation. May be involved in regulation of gene expression, nucleoid organization and DNA protection. The protein is Nucleoid-associated protein Psyc_0793 of Psychrobacter arcticus (strain DSM 17307 / VKM B-2377 / 273-4).